A 626-amino-acid chain; its full sequence is Probable potassium transport system protein Kup (626 aa).

Helical transmembrane passes span 13–33, 53–73, 102–122, 138–158, 169–189, 207–227, 248–268, 277–297, 338–358, 367–387, 399–419, and 421–441; these read VALM…SPLY, VLSI…VLLI, FFVV…MITP, HTLD…LFAI, LFGP…GWQV, FVFE…LALT, WFSM…ALLL, PFFL…ATVA, IYLP…VITF, AYGF…FAVL, WMLV…ANIF, and IHEG…LMMT.

It belongs to the HAK/KUP transporter (TC 2.A.72) family.

It localises to the cell inner membrane. It catalyses the reaction K(+)(in) + H(+)(in) = K(+)(out) + H(+)(out). Transport of potassium into the cell. Likely operates as a K(+):H(+) symporter. The sequence is that of Probable potassium transport system protein Kup from Bordetella avium (strain 197N).